We begin with the raw amino-acid sequence, 23 residues long: Phospholipase A2 crotoxin basic chain 3 (23 aa).

Requires Ca(2+) as cofactor. Contains 7 disulfide bonds. Expressed by the venom gland.

The protein resides in the secreted. It carries out the reaction a 1,2-diacyl-sn-glycero-3-phosphocholine + H2O = a 1-acyl-sn-glycero-3-phosphocholine + a fatty acid + H(+). Functionally, snake venom phospholipase A2 (PLA2) that shows presynaptic neurotoxicity. PLA2 catalyzes the calcium-dependent hydrolysis of the 2-acyl groups in 3-sn-phosphoglycerides. This is Phospholipase A2 crotoxin basic chain 3 from Crotalus durissus terrificus (South American rattlesnake).